Here is a 1196-residue protein sequence, read N- to C-terminus: Jouberin (1196 aa).

Residues 13–45 (KVRFEELLKTHSDLMREKKKLKKKLVRSEENIS) adopt a coiled-coil conformation. The residue at position 45 (Ser-45) is a Phosphoserine. Disordered stretches follow at residues 56 to 186 (MKET…EEDE), 215 to 242 (QLTY…KEVP), and 254 to 327 (ISGD…HEIT). The segment covering 80 to 91 (DDVSAANTNNLK) has biased composition (polar residues). Residues 92-101 (KSTRVTKNKL) show a composition bias toward basic residues. The segment covering 102 to 113 (RNTQLATENPNG) has biased composition (polar residues). Basic and acidic residues-rich tracts occupy residues 141 to 154 (LKPE…DSTH), 166 to 179 (DHQK…GREE), and 224 to 233 (LFHDDKLSSE). Residues 141–434 (LKPETPENKV…VFNENFPYLL (294 aa)) are interaction with HAP1. Basic residues predominate over residues 300–309 (KPKKTKKKTK). 7 WD repeats span residues 607–649 (AGER…FMRE), 652–691 (GHLN…TNTF), 695–735 (PHPS…DSAI), 742–781 (VHKS…NDLE), 797–837 (EFKG…ARKF), 841–880 (ANYR…QVAM), and 885–926 (PFKS…AQQE). Ser-1002 carries the post-translational modification Phosphoserine. One can recognise an SH3 domain in the interval 1051-1111 (DTAPTVVALY…PANHVASETL (61 aa)). Residues 1115–1196 (LPPEIKERSP…QAGRKVTLIE (82 aa)) form a disordered region. Basic and acidic residues-rich tracts occupy residues 1117 to 1136 (PEIK…KIEK) and 1161 to 1182 (THSE…DTRM). Ser-1123 is subject to Phosphoserine.

Self-associates. Part of the tectonic-like complex (also named B9 complex). Interacts with MKS1. Interacts with NPHP1; probably as heterodimers and/or AHI1(2):NPHP1(2) heterotetramers. Interacts (via SH3 domain) with the dynamin GTPase DNM2. Interacts with HAP1; probably as AHI1(2):HAP1(2) heterotetramers. Interacts with RAB8A. Interacts with CEND1. Interacts with CTNNB1/beta-catenin. Interacts with SPATA7. In terms of tissue distribution, highly expressed in the most primitive normal hematopoietic cells. Expressed in brain, particularly in neurons that give rise to the crossing axons of the corticospinal tract and superior cerebellar peduncles. Expressed in kidney (renal collecting duct cells) (at protein level).

The protein resides in the cytoplasm. Its subcellular location is the cytoskeleton. It localises to the cilium basal body. It is found in the cell junction. The protein localises to the adherens junction. The protein resides in the microtubule organizing center. Its subcellular location is the centrosome. It localises to the centriole. Involved in vesicle trafficking and required for ciliogenesis, formation of primary non-motile cilium, and recruitment of RAB8A to the basal body of primary cilium. Component of the tectonic-like complex, a complex localized at the transition zone of primary cilia and acting as a barrier that prevents diffusion of transmembrane proteins between the cilia and plasma membranes. Involved in neuronal differentiation. As a positive modulator of classical Wnt signaling, may play a crucial role in ciliary signaling during cerebellum embryonic development. This is Jouberin (AHI1) from Homo sapiens (Human).